Here is a 688-residue protein sequence, read N- to C-terminus: Methionine--tRNA ligase (688 aa).

A 'HIGH' region motif is present at residues 13–23 (PYANGQIHIGH). 4 residues coordinate Zn(2+): C144, C147, C157, and C160. The short motif at 335-339 (KMSKS) is the 'KMSKS' region element. K338 contacts ATP. Residues 582–688 (DFAKIDLRVA…SGAVPGMRIG (107 aa)) enclose the tRNA-binding domain.

It belongs to the class-I aminoacyl-tRNA synthetase family. MetG type 1 subfamily. As to quaternary structure, homodimer. Zn(2+) serves as cofactor.

It is found in the cytoplasm. It catalyses the reaction tRNA(Met) + L-methionine + ATP = L-methionyl-tRNA(Met) + AMP + diphosphate. Its function is as follows. Is required not only for elongation of protein synthesis but also for the initiation of all mRNA translation through initiator tRNA(fMet) aminoacylation. This Cupriavidus pinatubonensis (strain JMP 134 / LMG 1197) (Cupriavidus necator (strain JMP 134)) protein is Methionine--tRNA ligase.